The following is a 202-amino-acid chain: Small ribosomal subunit protein uS4 (202 aa).

Residues 1 to 13 (MSRYRGPRLRITR) show a composition bias toward basic residues. The disordered stretch occupies residues 1 to 43 (MSRYRGPRLRITRRLGDLPGLTRKAAKRSHPPGQHGQARRKRS). The 63-residue stretch at 90-152 (NRLDNVCFRL…KGSKKLAEAN (63 aa)) folds into the S4 RNA-binding domain.

The protein belongs to the universal ribosomal protein uS4 family. Part of the 30S ribosomal subunit. Contacts protein S5. The interaction surface between S4 and S5 is involved in control of translational fidelity.

In terms of biological role, one of the primary rRNA binding proteins, it binds directly to 16S rRNA where it nucleates assembly of the body of the 30S subunit. Its function is as follows. With S5 and S12 plays an important role in translational accuracy. The sequence is that of Small ribosomal subunit protein uS4 from Prochlorococcus marinus (strain MIT 9303).